Reading from the N-terminus, the 409-residue chain is Tyrosine--tRNA ligase (409 aa).

Y35 is an L-tyrosine binding site. The short motif at 40–49 is the 'HIGH' region element; the sequence is PTGSSLHVGH. L-tyrosine contacts are provided by Y168 and Q172. The 'KMSKS' region signature appears at 228–232; it reads KMGKT. K231 contributes to the ATP binding site. The S4 RNA-binding domain maps to 339–404; that stretch reads IKVTDLFVQV…AGKKRVVRIV (66 aa).

This sequence belongs to the class-I aminoacyl-tRNA synthetase family. TyrS type 1 subfamily. Homodimer.

The protein resides in the cytoplasm. It carries out the reaction tRNA(Tyr) + L-tyrosine + ATP = L-tyrosyl-tRNA(Tyr) + AMP + diphosphate + H(+). Functionally, catalyzes the attachment of tyrosine to tRNA(Tyr) in a two-step reaction: tyrosine is first activated by ATP to form Tyr-AMP and then transferred to the acceptor end of tRNA(Tyr). The protein is Tyrosine--tRNA ligase of Treponema pallidum (strain Nichols).